The sequence spans 160 residues: MLGNKFVAQLALQHLRNRGLVNSPSRLTFVRNRFAWGSDAVGPNVPVGGKMGASENPELHTYDGDYRGTISKGDKPIPDYFYRTPTTGRTYIDRCVTYFISAVIWAWFSYHMYYHSGHLLGHWYMPYLSEFTDEELGIPKDSAEDPEYWGNHKKEYGTYR.

The protein belongs to the complex I NDUFB2 subunit family. Complex I is composed of 45 different subunits.

The protein resides in the mitochondrion inner membrane. Functionally, accessory subunit of the mitochondrial membrane respiratory chain NADH dehydrogenase (Complex I), that is believed not to be involved in catalysis. Complex I functions in the transfer of electrons from NADH to the respiratory chain. The immediate electron acceptor for the enzyme is believed to be ubiquinone. This Caenorhabditis elegans protein is Probable NADH dehydrogenase [ubiquinone] 1 beta subcomplex subunit 2, mitochondrial.